Reading from the N-terminus, the 367-residue chain is Phosphoribosylaminoimidazole-succinocarboxamide synthase (367 aa).

This sequence belongs to the SAICAR synthetase family.

The enzyme catalyses 5-amino-1-(5-phospho-D-ribosyl)imidazole-4-carboxylate + L-aspartate + ATP = (2S)-2-[5-amino-1-(5-phospho-beta-D-ribosyl)imidazole-4-carboxamido]succinate + ADP + phosphate + 2 H(+). It functions in the pathway purine metabolism; IMP biosynthesis via de novo pathway; 5-amino-1-(5-phospho-D-ribosyl)imidazole-4-carboxamide from 5-amino-1-(5-phospho-D-ribosyl)imidazole-4-carboxylate: step 1/2. The protein is Phosphoribosylaminoimidazole-succinocarboxamide synthase of Shewanella sp. (strain MR-4).